Reading from the N-terminus, the 711-residue chain is Putative DNA topoisomerase 3 (711 aa).

Positions 2–135 (KYLILAEKPS…LRRLWISSVT (134 aa)) constitute a Toprim domain. Mg(2+) contacts are provided by E8 and D104. One can recognise a Topo IA-type catalytic domain in the interval 152–580 (YNDLYYAALA…EMKGFTKDVV (429 aa)). The segment at 186–191 (SLGRVQ) is interaction with DNA. The active-site O-(5'-phospho-DNA)-tyrosine intermediate is Y305. The interval 691-711 (MNKNEGLDNNPFKDALKNLNL) is disordered.

The protein belongs to the type IA topoisomerase family. The cofactor is Mg(2+).

It catalyses the reaction ATP-independent breakage of single-stranded DNA, followed by passage and rejoining.. Functionally, releases the supercoiling and torsional tension of DNA, which is introduced during the DNA replication and transcription, by transiently cleaving and rejoining one strand of the DNA duplex. Introduces a single-strand break via transesterification at a target site in duplex DNA. The scissile phosphodiester is attacked by the catalytic tyrosine of the enzyme, resulting in the formation of a DNA-(5'-phosphotyrosyl)-enzyme intermediate and the expulsion of a 3'-OH DNA strand. The free DNA strand then undergoes passage around the unbroken strand, thus removing DNA supercoils. Finally, in the religation step, the DNA 3'-OH attacks the covalent intermediate to expel the active-site tyrosine and restore the DNA phosphodiester backbone. The sequence is that of Putative DNA topoisomerase 3 from Staphylococcus aureus (strain bovine RF122 / ET3-1).